The following is a 467-amino-acid chain: Retinoic acid receptor RXR-alpha (467 aa).

The tract at residues 1 to 112 (MDTKHFLPLD…MNPVSSTEDI (112 aa)) is disordered. A modulating domain region spans residues 1 to 139 (MDTKHFLPLD…GNMASFTKHI (139 aa)). K4 is covalently cross-linked (Glycyl lysine isopeptide (Lys-Gly) (interchain with G-Cter in SUMO2)). Residues 11–25 (FSTQVNSSSLNSPTG) are compositionally biased toward polar residues. Phosphoserine occurs at positions 22 and 28. Positions 32–52 (PSLHPSLGPGIGSPLGSPGQL) are enriched in low complexity. Residues 54 to 63 (SPISTLSSPI) are compositionally biased toward polar residues. Residues S61 and S75 each carry the phosphoserine; by MAPK8 and MAPK9 modification. Positions 83–109 (SVPTTPTLGFGTGSPQLNSPMNPVSST) are enriched in polar residues. T87 carries the post-translational modification Phosphothreonine; by MAPK8 and MAPK9. Residue K113 forms a Glycyl lysine isopeptide (Lys-Gly) (interchain with G-Cter in SUMO) linkage. The residue at position 134 (S134) is a Phosphoserine. Residues C140 and C143 each coordinate Zn(2+). An NR C4-type zinc finger spans residues 140-160 (CAICGDRSSGKHYGVYSCEGC). A DNA-binding region (nuclear receptor) is located at residues 140 to 205 (CAICGDRSSG…RYQKCLAMGM (66 aa)). K150 is subject to N6-acetyllysine. Zn(2+) is bound by residues C157 and C160. Residues 165-170 (KRTVRK) form a nuclear localization signal region. Positions 176, 182, 192, and 195 each coordinate Zn(2+). The NR C4-type zinc finger occupies 176–200 (CRDNKDCLIDKRQRNRCQYCRYQKC). A hinge region spans residues 206-229 (KREAVQEERQRGKDRNENEVESTS). A compositionally biased stretch (basic and acidic residues) spans 211–223 (QEERQRGKDRNEN). The tract at residues 211 to 233 (QEERQRGKDRNENEVESTSSANE) is disordered. An NR LBD domain is found at 232–463 (NEDMPVEKIL…TFLMEMLEAP (232 aa)). A Phosphoserine modification is found at S264. S265 carries the post-translational modification Phosphoserine; by MAPK8 and MAPK9. The 9-cis-retinoate site is built by R321 and A332. All-trans-retinoate contacts are provided by R321 and A332. A required for nuclear export region spans residues 353–373 (RVLTELVSKMRDMQMDKTELG).

Belongs to the nuclear hormone receptor family. NR2 subfamily. Homodimer. Heterodimer with RARA; required for ligand-dependent retinoic acid receptor transcriptional activity. Heterodimer with PPARA (via the leucine-like zipper in the LBD); the interaction is required for PPARA transcriptional activity. Heterodimerizes with PPARG. Heterodimerizes (via NR LBD) with RARB. Heterodimerizes with NR1H4; the heterodimerization enhances the binding affinity for LXXLL motifs from coactivators. Interacts with coactivator NCO6. Interacts with coactivator NCO3. Interacts with coactivator FAM120B. Interacts with coactivator PELP1, SENP6, SFPQ, DNTTIP2 and RNF8. Interacts with PRMT2. Interacts with ASXL1. Interacts with BHLHE40/DEC1, BHLHE41/DEC2, NCOR1 and NCOR2. Interacts in a ligand-dependent fashion with MED1 and NCOA1. Interacts with VDR. Interacts with EP300; the interaction is decreased by 9-cis retinoic acid. Heterodimer (via C-terminus) with NR4A1 (via DNA-binding domain); the interaction is enhanced by 9-cis retinoic acid. NR4A1 competes with EP300 for interaction with RXRA and thereby attenuates EP300 mediated acetylation of RXRA. In the absence of hormonal ligand, interacts with TACC1. Interacts ith IGFBP3. Acetylated by EP300; acetylation enhances DNA binding and transcriptional activity. In terms of processing, phosphorylated on serine and threonine residues mainly in the N-terminal modulating domain. Constitutively phosphorylated on Ser-22 in the presence or absence of ligand. Under stress conditions, hyperphosphorylated by activated JNK on Ser-61, Ser-75, Thr-87 and Ser-265. Phosphorylated on Ser-28, in vitro, by PKA. This phosphorylation is required for repression of cAMP-mediated transcriptional activity of RARA. Post-translationally, ubiquitinated by UBR5, leading to its degradation: UBR5 specifically recognizes and binds ligand-bound RXRA when it is not associated with coactivators (NCOAs). In presence of NCOAs, the UBR5-degron is not accessible, preventing its ubiquitination and degradation. Sumoylation negatively regulates transcriptional activity. Desumoylated specifically by SENP6. As to expression, expressed in macrophages (at protein level).

The protein resides in the nucleus. Its subcellular location is the cytoplasm. It localises to the mitochondrion. Its function is as follows. Receptor for retinoic acid that acts as a transcription factor. Forms homo- or heterodimers with retinoic acid receptors (RARs) and binds to target response elements in response to their ligands, all-trans or 9-cis retinoic acid, to regulate gene expression in various biological processes. The RAR/RXR heterodimers bind to the retinoic acid response elements (RARE) composed of tandem 5'-AGGTCA-3' sites known as DR1-DR5 to regulate transcription. The high affinity ligand for retinoid X receptors (RXRs) is 9-cis retinoic acid. In the absence of ligand, the RXR-RAR heterodimers associate with a multiprotein complex containing transcription corepressors that induce histone deacetylation, chromatin condensation and transcriptional suppression. On ligand binding, the corepressors dissociate from the receptors and coactivators are recruited leading to transcriptional activation. Serves as a common heterodimeric partner for a number of nuclear receptors, such as RARA, RARB and PPARA. The RXRA/RARB heterodimer can act as a transcriptional repressor or transcriptional activator, depending on the RARE DNA element context. The RXRA/PPARA heterodimer is required for PPARA transcriptional activity on fatty acid oxidation genes such as ACOX1 and the P450 system genes. Together with RARA, positively regulates microRNA-10a expression, thereby inhibiting the GATA6/VCAM1 signaling response to pulsatile shear stress in vascular endothelial cells. Acts as an enhancer of RARA binding to RARE DNA element. May facilitate the nuclear import of heterodimerization partners such as VDR and NR4A1. Promotes myelin debris phagocytosis and remyelination by macrophages. Plays a role in the attenuation of the innate immune system in response to viral infections, possibly by negatively regulating the transcription of antiviral genes such as type I IFN genes. Involved in the regulation of calcium signaling by repressing ITPR2 gene expression, thereby controlling cellular senescence. This Mus musculus (Mouse) protein is Retinoic acid receptor RXR-alpha (Rxra).